A 565-amino-acid chain; its full sequence is Putative ribonucleoside-diphosphate reductase large subunit (565 aa).

Residues serine 60, 74–75, glycine 103, 256–260, and 400–404 each bind substrate; these read SC, NLCNE, and PNANS. Cysteine 75 and cysteine 273 are disulfide-bonded. Catalysis depends on asparagine 256, which acts as the Proton acceptor. The active-site Cysteine radical intermediate is the cysteine 258. The Proton acceptor role is filled by glutamate 260.

Belongs to the ribonucleoside diphosphate reductase large chain family. In terms of assembly, heterotetramer composed of a homodimer of the large subunit (R1) and a homodimer of the small subunit (R2). Larger multisubunit protein complex are also active, composed of (R1)n(R2)n.

The catalysed reaction is a 2'-deoxyribonucleoside 5'-diphosphate + [thioredoxin]-disulfide + H2O = a ribonucleoside 5'-diphosphate + [thioredoxin]-dithiol. Under complex allosteric control mediated by deoxynucleoside triphosphates and ATP binding. The type of nucleotide bound at the specificity site determines substrate preference. It seems probable that ATP makes the enzyme reduce CDP and UDP, dGTP favors ADP reduction and dTTP favors GDP reduction. In terms of biological role, ribonucleoside-diphosphate reductase holoenzyme provides the precursors necessary for viral DNA synthesis. Allows virus growth in non-dividing cells. Catalyzes the biosynthesis of deoxyribonucleotides from the corresponding ribonucleotides. The polypeptide is Putative ribonucleoside-diphosphate reductase large subunit (Frog virus 3 (isolate Goorha) (FV-3)).